Consider the following 417-residue polypeptide: Histidine--tRNA ligase (417 aa).

This sequence belongs to the class-II aminoacyl-tRNA synthetase family. As to quaternary structure, homodimer.

It localises to the cytoplasm. The catalysed reaction is tRNA(His) + L-histidine + ATP = L-histidyl-tRNA(His) + AMP + diphosphate + H(+). In Oleidesulfovibrio alaskensis (strain ATCC BAA-1058 / DSM 17464 / G20) (Desulfovibrio alaskensis), this protein is Histidine--tRNA ligase.